A 263-amino-acid chain; its full sequence is L-erythrulose-1-phosphate isomerase (263 aa).

The active-site Electrophile is the histidine 106. The Proton acceptor role is filled by glutamate 178.

The protein belongs to the triosephosphate isomerase family.

The enzyme catalyses L-erythrulose 1-phosphate = D-erythrulose 4-phosphate. Its pathway is carbohydrate metabolism; L-threitol degradation. Functionally, catalyzes the isomerization of L-erythrulose-1P to D-erythrulose-4P. Involved in the degradation pathway of L-threitol, that allows M.smegmatis to grow on this compound as the sole carbon source. The sequence is that of L-erythrulose-1-phosphate isomerase from Mycolicibacterium smegmatis (strain ATCC 700084 / mc(2)155) (Mycobacterium smegmatis).